Here is a 122-residue protein sequence, read N- to C-terminus: Small ribosomal subunit protein uS13 (122 aa).

The disordered stretch occupies residues 93–122 (RRSLPVRGQRTHTNARTRKGPAKPIAGKKK).

Belongs to the universal ribosomal protein uS13 family. In terms of assembly, part of the 30S ribosomal subunit. Forms a loose heterodimer with protein S19. Forms two bridges to the 50S subunit in the 70S ribosome.

Located at the top of the head of the 30S subunit, it contacts several helices of the 16S rRNA. In the 70S ribosome it contacts the 23S rRNA (bridge B1a) and protein L5 of the 50S subunit (bridge B1b), connecting the 2 subunits; these bridges are implicated in subunit movement. Contacts the tRNAs in the A and P-sites. The polypeptide is Small ribosomal subunit protein uS13 (Chelativorans sp. (strain BNC1)).